The following is a 273-amino-acid chain: Gap junction beta-5 protein (273 aa).

Residues Met-1–Phe-20 lie on the Cytoplasmic side of the membrane. Residues Gly-21–Ala-40 form a helical membrane-spanning segment. The Extracellular portion of the chain corresponds to Glu-41–Arg-75. The helical transmembrane segment at Leu-76–Arg-98 threads the bilayer. The Cytoplasmic portion of the chain corresponds to Glu-99 to Gly-126. The helical transmembrane segment at Leu-127–Phe-149 threads the bilayer. Residues His-150–Thr-187 lie on the Extracellular side of the membrane. Residues Leu-188–Ser-210 traverse the membrane as a helical segment. Topologically, residues Lys-211–Leu-273 are cytoplasmic.

This sequence belongs to the connexin family. Beta-type (group I) subfamily. As to quaternary structure, a connexon is composed of a hexamer of connexins.

It localises to the cell membrane. It is found in the cell junction. Its subcellular location is the gap junction. In terms of biological role, one gap junction consists of a cluster of closely packed pairs of transmembrane channels, the connexons, through which materials of low MW diffuse from one cell to a neighboring cell. This is Gap junction beta-5 protein (GJB5) from Homo sapiens (Human).